We begin with the raw amino-acid sequence, 340 residues long: Phosphoribosylformylglycinamidine cyclo-ligase (340 aa).

Belongs to the AIR synthase family.

Its subcellular location is the cytoplasm. It carries out the reaction 2-formamido-N(1)-(5-O-phospho-beta-D-ribosyl)acetamidine + ATP = 5-amino-1-(5-phospho-beta-D-ribosyl)imidazole + ADP + phosphate + H(+). The protein operates within purine metabolism; IMP biosynthesis via de novo pathway; 5-amino-1-(5-phospho-D-ribosyl)imidazole from N(2)-formyl-N(1)-(5-phospho-D-ribosyl)glycinamide: step 2/2. The protein is Phosphoribosylformylglycinamidine cyclo-ligase of Streptococcus pyogenes serotype M18 (strain MGAS8232).